The chain runs to 168 residues: Small ribosomal subunit protein uS5 (168 aa).

The S5 DRBM domain maps to 11 to 74; the sequence is YSEKVVKIDR…ESAKKHLVKI (64 aa).

It belongs to the universal ribosomal protein uS5 family. Part of the 30S ribosomal subunit. Contacts proteins S4 and S8.

Its function is as follows. With S4 and S12 plays an important role in translational accuracy. In terms of biological role, located at the back of the 30S subunit body where it stabilizes the conformation of the head with respect to the body. The polypeptide is Small ribosomal subunit protein uS5 (Leptospira interrogans serogroup Icterohaemorrhagiae serovar copenhageni (strain Fiocruz L1-130)).